The chain runs to 260 residues: Thiamine thiazole synthase (260 aa).

NAD(+)-binding positions include Ala36, 55 to 56 (EQ), Gly63, and 154 to 156 (HVD). Asp156 and His171 together coordinate Fe cation. NAD(+) is bound at residue Met224. Arg234 contributes to the glycine binding site.

It belongs to the THI4 family. In terms of assembly, homooctamer; tetramer of dimers. Requires Fe(2+) as cofactor.

It catalyses the reaction hydrogen sulfide + glycine + NAD(+) = ADP-5-ethyl-4-methylthiazole-2-carboxylate + nicotinamide + 3 H2O + H(+). Its pathway is cofactor biosynthesis; thiamine diphosphate biosynthesis. Involved in the biosynthesis of the thiazole moiety of thiamine. Catalyzes the conversion of NAD and glycine to adenosine diphosphate 5-(2-hydroxyethyl)-4-methylthiazole-2-carboxylate (ADT), an adenylated thiazole intermediate, using free sulfide as a source of sulfur. In Methanosarcina mazei (strain ATCC BAA-159 / DSM 3647 / Goe1 / Go1 / JCM 11833 / OCM 88) (Methanosarcina frisia), this protein is Thiamine thiazole synthase.